Here is a 635-residue protein sequence, read N- to C-terminus: Threonine--tRNA ligase (635 aa).

One can recognise a TGS domain in the interval 1–61 (MIKITLKDGS…KEDAALELLT (61 aa)). The catalytic stretch occupies residues 242–532 (DHRKLGQELD…LTEHFAGAFP (291 aa)). 3 residues coordinate Zn(2+): cysteine 333, histidine 384, and histidine 509.

The protein belongs to the class-II aminoacyl-tRNA synthetase family. Homodimer. Zn(2+) is required as a cofactor.

Its subcellular location is the cytoplasm. The catalysed reaction is tRNA(Thr) + L-threonine + ATP = L-threonyl-tRNA(Thr) + AMP + diphosphate + H(+). In terms of biological role, catalyzes the attachment of threonine to tRNA(Thr) in a two-step reaction: L-threonine is first activated by ATP to form Thr-AMP and then transferred to the acceptor end of tRNA(Thr). Also edits incorrectly charged L-seryl-tRNA(Thr). In Desulforamulus reducens (strain ATCC BAA-1160 / DSM 100696 / MI-1) (Desulfotomaculum reducens), this protein is Threonine--tRNA ligase.